A 984-amino-acid chain; its full sequence is MSQTPSSLCDLEHHSAFVERHIGPNDAEIAQMLEVVGHASLDALTDAIVPGNIKSPAPLALPEAITEEEALVKIRAIADKNTVYRNFIGQGYYGTHTPKVILRNILENPAWYTAYTPYQAEISQGRMEALINFQTLCADLTGMQIANASLLDEATAAAEAMTLAKRSAKSRSDIFFVHDAVHPQTLELLRTRAEPLDIMLRVGTPEEALQAECFGVLLQYPDSFGHIGDHAALADAVHAQGGLVAVATDLLALTLIAAPGQWGADIVVGNSQRFGVPFGFGGPHAAFMACRDAYKRSMPGRLIGVSIDAAGNPAYRLTLQTREQHIRREKATSNICTAQVLLAVMASMYAVYHGPDGLTRIARRTHRLAAILAAALRGAGVTVGEHFFDTLHVKAIDADAIHARARAAGINLRAIDSEAVGISLDETTTRADVVALAQLFGAMADVDALDAATADALPQGLLRSSAFLTHPVFNTHHSEHELLRYMRSLADKDLAMDRTMIPLGSCTMKLNATAEMIPVTWPEFGAIHPLAPAEQSAGYAQLIDELEAMLVECTGYDAVSLQPNSGAQGEYAGLLAIRAYHRSRGEAHRDICLIPESAHGTNPASAQMCGMTVVVTKCDANGNVDVDDIRAKAEKYSDRLAALMITYPSTHGVFEEDVVAICEAVHAHGGQVYTDGANMNALVGVAKPGKWGSDVSHLNLHKTFCIPHGGGGPGVGPCAVKSHLAPFLPRAGLHAGEGQTAAIHGGGFNSGSGSGHSSRIGGMVSAAAYGSASILPISWMYVTMMGSAGLRKATQVALLNANYIAKRLAPHYKTLYTGRNGLVAHECILDVRPLEKTSGIGAEDIAKRLIDFGFHAPTLSFPVAGTLMVEPTESESQHELDRFIDAMIQIREEIRAIEDGRLDREDNPLKHAPHTATQVSASEWTHAYPRELAAFPLPSLKQQKYWPPVARVDNVYGDKNVMCACIPVDAYKIPVDAYKEDAEA.

Lys-702 is subject to N6-(pyridoxal phosphate)lysine.

It belongs to the GcvP family. As to quaternary structure, the glycine cleavage system is composed of four proteins: P, T, L and H. The cofactor is pyridoxal 5'-phosphate.

The catalysed reaction is N(6)-[(R)-lipoyl]-L-lysyl-[glycine-cleavage complex H protein] + glycine + H(+) = N(6)-[(R)-S(8)-aminomethyldihydrolipoyl]-L-lysyl-[glycine-cleavage complex H protein] + CO2. Functionally, the glycine cleavage system catalyzes the degradation of glycine. The P protein binds the alpha-amino group of glycine through its pyridoxal phosphate cofactor; CO(2) is released and the remaining methylamine moiety is then transferred to the lipoamide cofactor of the H protein. In Xanthomonas oryzae pv. oryzae (strain MAFF 311018), this protein is Glycine dehydrogenase (decarboxylating).